A 152-amino-acid chain; its full sequence is Transcriptional repressor NrdR (152 aa).

Residues 3-34 (CPFCNHGELKVIDSRNAPEANAIKRRRECLNC) fold into a zinc finger. The region spanning 48 to 138 (LQVLKRDGRY…VYRRFKDVGE (91 aa)) is the ATP-cone domain.

This sequence belongs to the NrdR family. Zn(2+) is required as a cofactor.

Its function is as follows. Negatively regulates transcription of bacterial ribonucleotide reductase nrd genes and operons by binding to NrdR-boxes. In Chlamydia abortus (strain DSM 27085 / S26/3) (Chlamydophila abortus), this protein is Transcriptional repressor NrdR.